A 232-amino-acid chain; its full sequence is Zinc import ATP-binding protein ZnuC (232 aa).

The ABC transporter domain occupies 5–220 (VNLKNIFVFY…PSFIEMFGCY (216 aa)). ATP is bound at residue 37–44 (GPNGSGKS).

Belongs to the ABC transporter superfamily. Zinc importer (TC 3.A.1.15.5) family. As to quaternary structure, the complex is composed of two ATP-binding proteins (ZnuC), two transmembrane proteins (ZnuB) and a solute-binding protein (ZnuA).

Its subcellular location is the cell membrane. The enzyme catalyses Zn(2+)(out) + ATP(in) + H2O(in) = Zn(2+)(in) + ADP(in) + phosphate(in) + H(+)(in). Functionally, part of the ABC transporter complex ZnuABC involved in zinc import. Responsible for energy coupling to the transport system. The sequence is that of Zinc import ATP-binding protein ZnuC from Wigglesworthia glossinidia brevipalpis.